Reading from the N-terminus, the 720-residue chain is Mitogen-activated protein kinase 6 (720 aa).

Residue Met1 forms a Peptide (Met-Gly) (interchain with G-Cter in ubiquitin) linkage. The Protein kinase domain occupies 20–316 (YMDLKPLGCG…AEEALSHPYM (297 aa)). Residues 26 to 34 (LGCGGNGLV) and Lys49 contribute to the ATP site. Asp152 acts as the Proton acceptor in catalysis. Ser189 carries the phosphoserine; by PAK1, PAK2 and PAK3 modification. The SEG motif signature appears at 189 to 191 (SEG). Positions 332–337 (FHIEDE) match the FRIEDE motif motif. 3 positions are modified to phosphoserine: Ser386, Ser554, and Ser556. Residues 638–657 (SEMLETEPVEEGKRGERGRE) are disordered. The span at 647-657 (EEGKRGERGRE) shows a compositional bias: basic and acidic residues. Ser683 bears the Phosphoserine mark. A compositionally biased stretch (polar residues) spans 700–714 (AMKSSPQIPHKTYSS). The segment at 700–720 (AMKSSPQIPHKTYSSILKHLN) is disordered.

This sequence belongs to the protein kinase superfamily. CMGC Ser/Thr protein kinase family. MAP kinase subfamily. In terms of assembly, heterodimer with ERK4/MAPK4. Interacts with (via FRIEDE motif) MAPKAPK5. Interacts with UBE3A; this interaction may be indirect and mediated by HERC2, possibly via HERC2 interaction with NEURL4. The cofactor is Mg(2+). Phosphorylated at Ser-189 by PAK1, PAK2 and PAK3 resulting in catalytic activation. Phosphorylated by MAPKAPK5 at other sites. Post-translationally, ubiquitination at Met-1 leads to degradation by the proteasome pathway.

It localises to the cytoplasm. It is found in the nucleus. The enzyme catalyses L-seryl-[protein] + ATP = O-phospho-L-seryl-[protein] + ADP + H(+). The catalysed reaction is L-threonyl-[protein] + ATP = O-phospho-L-threonyl-[protein] + ADP + H(+). Activated by phosphorylation at Ser-189. Functionally, atypical MAPK protein. Phosphorylates microtubule-associated protein 2 (MAP2) and MAPKAPK5. The precise role of the complex formed with MAPKAPK5 is still unclear, but the complex follows a complex set of phosphorylation events: upon interaction with atypical MAPKAPK5, ERK3/MAPK6 is phosphorylated at Ser-189 and then mediates phosphorylation and activation of MAPKAPK5, which in turn phosphorylates ERK3/MAPK6. May promote entry in the cell cycle. The polypeptide is Mitogen-activated protein kinase 6 (Mapk6) (Mus musculus (Mouse)).